The sequence spans 480 residues: Adenosylmethionine-8-amino-7-oxononanoate aminotransferase (480 aa).

Pyridoxal 5'-phosphate is bound at residue 126–127; the sequence is GS. Tyrosine 160 contacts substrate. Aspartate 270 lines the pyridoxal 5'-phosphate pocket. Lysine 314 is subject to N6-(pyridoxal phosphate)lysine. Glycine 350 is a binding site for substrate. 351 to 352 provides a ligand contact to pyridoxal 5'-phosphate; sequence PT. Substrate is bound at residue arginine 441.

Belongs to the class-III pyridoxal-phosphate-dependent aminotransferase family. BioA subfamily. It depends on pyridoxal 5'-phosphate as a cofactor.

It catalyses the reaction (8S)-8-amino-7-oxononanoate + S-adenosyl-L-methionine = S-adenosyl-4-methylsulfanyl-2-oxobutanoate + (7R,8S)-7,8-diammoniononanoate. It functions in the pathway cofactor biosynthesis; biotin biosynthesis; 7,8-diaminononanoate from 8-amino-7-oxononanoate (SAM route): step 1/1. In terms of biological role, catalyzes the transfer of the alpha-amino group from S-adenosyl-L-methionine (SAM) to 7-keto-8-aminopelargonic acid (KAPA) to form 7,8-diaminopelargonic acid (DAPA). It is the only aminotransferase known to utilize SAM as an amino donor. The protein is Adenosylmethionine-8-amino-7-oxononanoate aminotransferase of Saccharomyces cerevisiae (strain ATCC 204508 / S288c) (Baker's yeast).